The chain runs to 275 residues: Membrane protein insertase YidC 2 (275 aa).

An N-terminal signal peptide occupies residues 1-21 (MKKKNIILISVLLGALLLLTG). A lipid anchor (N-palmitoyl cysteine) is attached at Cys22. The S-diacylglycerol cysteine moiety is linked to residue Cys22. Helical transmembrane passes span 48–68 (FVAK…TLLI), 133–153 (QMGC…YYAI), 174–194 (MVLA…SMIG), and 212–232 (IMIL…WAVG).

This sequence belongs to the OXA1/ALB3/YidC family. Type 2 subfamily.

It localises to the cell membrane. Its function is as follows. Required for the insertion and/or proper folding and/or complex formation of integral membrane proteins into the membrane. Involved in integration of membrane proteins that insert both dependently and independently of the Sec translocase complex, as well as at least some lipoproteins. This chain is Membrane protein insertase YidC 2, found in Listeria monocytogenes serotype 4b (strain F2365).